The sequence spans 117 residues: Large ribosomal subunit protein uL18 (117 aa).

It belongs to the universal ribosomal protein uL18 family. In terms of assembly, part of the 50S ribosomal subunit; part of the 5S rRNA/L5/L18/L25 subcomplex. Contacts the 5S and 23S rRNAs.

In terms of biological role, this is one of the proteins that bind and probably mediate the attachment of the 5S RNA into the large ribosomal subunit, where it forms part of the central protuberance. The chain is Large ribosomal subunit protein uL18 from Haemophilus ducreyi (strain 35000HP / ATCC 700724).